Reading from the N-terminus, the 334-residue chain is Forkhead box protein N2 (334 aa).

2 disordered regions span residues Met1–Thr52 and Ser83–Lys108. The segment at residues Lys108 to Ser204 is a DNA-binding region (fork-head).

The protein resides in the nucleus. The chain is Forkhead box protein N2 from Xenopus tropicalis (Western clawed frog).